The chain runs to 118 residues: Holo-[acyl-carrier-protein] synthase (118 aa).

Residues Asp-9 and Glu-52 each contribute to the Mg(2+) site.

This sequence belongs to the P-Pant transferase superfamily. AcpS family. Mg(2+) serves as cofactor.

It localises to the cytoplasm. It catalyses the reaction apo-[ACP] + CoA = holo-[ACP] + adenosine 3',5'-bisphosphate + H(+). In terms of biological role, transfers the 4'-phosphopantetheine moiety from coenzyme A to a Ser of acyl-carrier-protein. This is Holo-[acyl-carrier-protein] synthase from Frankia casuarinae (strain DSM 45818 / CECT 9043 / HFP020203 / CcI3).